The following is an 89-amino-acid chain: Ubiquinol-cytochrome-c reductase complex assembly factor 3 (89 aa).

At 1–7 the chain is on the mitochondrial matrix side; that stretch reads MEVARKA. A helical membrane pass occupies residues 8 to 28; that stretch reads LVAVAVLGGGAGVGSILFALV. The interval 23–80 is mediates lipid-binding; the sequence is ILFALVTPGELQKQSMLQEMPERDSRRRDEAVRTTELVMATLKDAAATKENVAWRRNW. At 29–89 the chain is on the mitochondrial intermembrane side; that stretch reads TPGELQKQSM…WTVSGDGRSA (61 aa).

It belongs to the UQCC3 family. As to quaternary structure, associates with the ubiquinol-cytochrome c reductase complex (mitochondrial respiratory chain complex III(CIII) or cytochrome b-c1 complex). Interacts with UQCC1. Forms a complex, named COMC, composed of UQCC1, UQCC2; UQCC3 and UQCC4; mediates MT-CYB hemylation and association with the first nuclear-encoded complex III subunit UQCRQ. Post-translationally, probably cleaved by OMA1 under mitochondrial stress conditions.

The protein resides in the mitochondrion inner membrane. In terms of biological role, required for the assembly of the ubiquinol-cytochrome c reductase complex (mitochondrial respiratory chain complex III or cytochrome b-c1 complex), mediating cytochrome b recruitment and probably stabilization within the complex. Thereby, plays an important role in ATP production by mitochondria. Cardiolipin-binding protein, it may also control the cardiolipin composition of mitochondria membranes and their morphology. This is Ubiquinol-cytochrome-c reductase complex assembly factor 3 from Mus musculus (Mouse).